We begin with the raw amino-acid sequence, 341 residues long: UDP-N-acetyl-alpha-D-glucosaminouronate 4-epimerase (341 aa).

The NAD(+) site is built by Phe-27, Ile-28, Asp-47, Ala-50, Thr-51, Gly-52, Asp-78, Ile-79, and Gln-98. UDP-N-acetyl-alpha-D-galactosamine is bound at residue Ser-103. Residue Thr-117 participates in NAD(+) binding. Ser-142, Ser-143, and Tyr-166 together coordinate UDP-N-acetyl-alpha-D-galactosamine. Residues Tyr-166 and Lys-170 each coordinate NAD(+). The Proton acceptor role is filled by Tyr-166. Asn-195 contacts UDP-N-acetyl-alpha-D-galactosamine. Val-196 is a binding site for NAD(+). UDP-N-acetyl-alpha-D-galactosamine contacts are provided by Val-210, Tyr-225, Asn-227, Arg-234, Arg-299, and Asp-302.

It belongs to the NAD(P)-dependent epimerase/dehydratase family. In terms of assembly, homodimer. The cofactor is NAD(+).

It catalyses the reaction UDP-2-acetamido-2-deoxy-alpha-D-glucuronate = UDP-2-acetamido-2-deoxy-alpha-D-galacturonate. It carries out the reaction UDP-N-acetyl-alpha-D-glucosamine = UDP-N-acetyl-alpha-D-galactosamine. Its pathway is bacterial outer membrane biogenesis; LPS O-antigen biosynthesis. Functionally, epimerase required for the biosynthesis of the B-band O antigen of serotype O6 lipopolysaccharide. Catalyzes the reversible epimerization of UDP-N-acetylglucosaminuronic acid (UDP-GlcNAcA) to UDP-N-acetylgalactosaminuronic acid (UDP-GalNAcA). Also catalyzes the reversible epimerization of UDP-N-acetylglucosamine (UDP-GlcNAc) to UDP-N-acetylgalactosamine (UDP-GalNAc). Has very low epimerase activity with UDP-glucose (UDP-Glc) and UDP-galactose (UDP-Gal). The protein is UDP-N-acetyl-alpha-D-glucosaminouronate 4-epimerase of Pseudomonas aeruginosa.